The primary structure comprises 224 residues: PKHD-type hydroxylase Shewana3_0717 (224 aa).

Positions 78–176 (QFYPPLFNRY…RTAAFMWLQS (99 aa)) constitute a Fe2OG dioxygenase domain. Fe cation is bound by residues His96, Asp98, and His157. Residue Arg167 coordinates 2-oxoglutarate.

The cofactor is Fe(2+). L-ascorbate is required as a cofactor.

The chain is PKHD-type hydroxylase Shewana3_0717 from Shewanella sp. (strain ANA-3).